The chain runs to 84 residues: Acetylcholine receptor subunit alpha (84 aa).

2 cysteine pairs are disulfide-bonded: C7/C21 and C71/C72. An N-linked (GlcNAc...) asparagine glycan is attached at N20.

This sequence belongs to the ligand-gated ion channel (TC 1.A.9) family. Acetylcholine receptor (TC 1.A.9.1) subfamily. Alpha-1/CHRNA1 sub-subfamily. One of the alpha chains that assemble within the acetylcholine receptor, a pentamer of two alpha chains, a beta, a delta, and a gamma (in immature muscle) or epsilon (in mature muscle) chains. The muscle heteropentamer composed of alpha-1, beta-1, delta, epsilon subunits interacts with the alpha-conotoxin ImII.

It localises to the postsynaptic cell membrane. It is found in the cell membrane. It carries out the reaction K(+)(in) = K(+)(out). The catalysed reaction is Na(+)(in) = Na(+)(out). Upon acetylcholine binding, the AChR responds by an extensive change in conformation that affects all subunits and leads to opening of an ion-conducting channel across the plasma membrane. In Felis catus (Cat), this protein is Acetylcholine receptor subunit alpha (CHRNA1).